Consider the following 95-residue polypeptide: MSTHLCAIYKSPKREGMFLYVAKRDQFDSVPEALRQMFGKPQFVMLFNLNGEKQLKRSKNEEVLQAIQTQGFFLQMPPPPENLLKTFLEQNRGEA.

Residues His4–Leu88 form the YcgL domain.

The sequence is that of YcgL domain-containing protein APJL_0712 from Actinobacillus pleuropneumoniae serotype 3 (strain JL03).